The following is a 537-amino-acid chain: Chaperonin GroEL (537 aa).

ATP contacts are provided by residues Thr-29–Pro-32, Asp-86–Thr-90, Gly-413, Asn-477–Ala-479, and Asp-493.

This sequence belongs to the chaperonin (HSP60) family. Forms a cylinder of 14 subunits composed of two heptameric rings stacked back-to-back. Interacts with the co-chaperonin GroES.

The protein localises to the cytoplasm. The enzyme catalyses ATP + H2O + a folded polypeptide = ADP + phosphate + an unfolded polypeptide.. Functionally, together with its co-chaperonin GroES, plays an essential role in assisting protein folding. The GroEL-GroES system forms a nano-cage that allows encapsulation of the non-native substrate proteins and provides a physical environment optimized to promote and accelerate protein folding. This chain is Chaperonin GroEL, found in Bifidobacterium animalis subsp. lactis (strain AD011).